Here is a 174-residue protein sequence, read N- to C-terminus: 2-hydroxy-palmitic acid dioxygenase MPO1 (174 aa).

Residues 1 to 23 are Cytoplasmic-facing; the sequence is MGEGLLDLRSQLGFYKFYHHNPK. The chain crosses the membrane as a helical span at residues 24–44; sequence NVLIHSIFVPTILFSGSCMLH. Residues 45–63 lie on the Lumenal side of the membrane; it reads RVKIYQSISLTAVLSVLFS. Residues 64–84 traverse the membrane as a helical segment; the sequence is IFYCLLYLPTGLLAGVLLLLL. Residues 85 to 98 lie on the Cytoplasmic side of the membrane; it reads NLALIDHRVDLTFK. Residues 99–119 form a helical membrane-spanning segment; sequence QELGLFTIGWIFQFVGHGVFE. The Lumenal portion of the chain corresponds to 120–131; the sequence is KRRPALIDNLVQ. The chain crosses the membrane as a helical span at residues 132-152; that stretch reads SLVLAPYFIMFEFLFKLGFMP. The Cytoplasmic segment spans residues 153-174; it reads RLKATLEHDLEIKQRNLRMQRQ.

This sequence belongs to the MPO1 family. It depends on Fe(2+) as a cofactor.

The protein resides in the endoplasmic reticulum membrane. It carries out the reaction (R)-2-hydroxyhexadecanoate + O2 = pentadecanoate + CO2 + H2O. Dioxygenase that catalyzes the alpha-oxidation of 2-hydroxy fatty acids in an iron-dependent manner. Involved in metabolism of phytosphingosine and is required for proper endoplasmic reticulum stress response. This Saccharomyces cerevisiae (strain ATCC 204508 / S288c) (Baker's yeast) protein is 2-hydroxy-palmitic acid dioxygenase MPO1.